Consider the following 163-residue polypeptide: Ribosome maturation factor RimP (163 aa).

It belongs to the RimP family.

The protein resides in the cytoplasm. Functionally, required for maturation of 30S ribosomal subunits. This chain is Ribosome maturation factor RimP, found in Polynucleobacter asymbioticus (strain DSM 18221 / CIP 109841 / QLW-P1DMWA-1) (Polynucleobacter necessarius subsp. asymbioticus).